We begin with the raw amino-acid sequence, 178 residues long: RNA-binding protein (178 aa).

Residues P113 to R178 are disordered. Residues S168–R178 are compositionally biased toward basic residues.

It belongs to the phytoreovirus RNA-binding protein family.

It localises to the host cytoplasm. Its function is as follows. Constituent of viral factories. Binds to ssRNA and dsRNA. In Wound tumor virus (WTV), this protein is RNA-binding protein.